Here is a 423-residue protein sequence, read N- to C-terminus: Glutamate-1-semialdehyde 2,1-aminomutase (423 aa).

K262 is modified (N6-(pyridoxal phosphate)lysine).

This sequence belongs to the class-III pyridoxal-phosphate-dependent aminotransferase family. HemL subfamily. In terms of assembly, homodimer. Pyridoxal 5'-phosphate is required as a cofactor.

Its subcellular location is the cytoplasm. It catalyses the reaction (S)-4-amino-5-oxopentanoate = 5-aminolevulinate. It participates in porphyrin-containing compound metabolism; protoporphyrin-IX biosynthesis; 5-aminolevulinate from L-glutamyl-tRNA(Glu): step 2/2. The sequence is that of Glutamate-1-semialdehyde 2,1-aminomutase from Saccharophagus degradans (strain 2-40 / ATCC 43961 / DSM 17024).